Here is a 399-residue protein sequence, read N- to C-terminus: P2X purinoceptor 1 (399 aa).

Over 1–28 (MARRLQDELSAFFFEYDTPRMVLVRNKK) the chain is Cytoplasmic. A helical membrane pass occupies residues 29-50 (VGVIFRLIQLVVLVYVIGWVFV). Residues 51–338 (YEKGYQTSSD…IPTMTTIGSG (288 aa)) lie on the Extracellular side of the membrane. The CTP site is built by K68, K70, and K140. K70 contacts ATP. Intrachain disulfides connect C117-C165, C126-C149, and C132-C159. Residues N153 and N184 are each glycosylated (N-linked (GlcNAc...) asparagine). T186 contributes to the CTP binding site. T186 contacts ATP. N-linked (GlcNAc...) asparagine glycosylation occurs at N210. Cystine bridges form between C217-C227 and C261-C270. ATP is bound by residues S286, N290, and R292. N290 and R292 together coordinate CTP. The N-linked (GlcNAc...) asparagine glycan is linked to N300. K309 is a CTP binding site. ATP is bound at residue K309. The interval 331–338 (TMTTIGSG) is pore-forming motif. The chain crosses the membrane as a helical span at residues 339-358 (IGIFGVATVLCDLLLLHILP). Topologically, residues 359–399 (KRHYYKQKKFKYAEDMGPGEGEHDPVATSSTLGLQENMRTS) are cytoplasmic. The segment at 374–399 (MGPGEGEHDPVATSSTLGLQENMRTS) is disordered. Polar residues predominate over residues 385-399 (ATSSTLGLQENMRTS). A phosphoserine mark is found at S387 and S388. T389 carries the phosphothreonine modification.

This sequence belongs to the P2X receptor family. In terms of assembly, functional P2XRs are organized as homomeric and heteromeric trimers. Homotrimer. Forms heterodimer with P2RX2. Forms heterodimer with P2RX4. Forms heterodimer with P2RX5. In terms of tissue distribution, high levels in vas deferens and urinary bladder. Lower extent in spinal cord, coeliac ganglion, lung and spleen (probably in the smooth muscle part of both organs).

The protein localises to the cell membrane. The enzyme catalyses Ca(2+)(in) = Ca(2+)(out). It catalyses the reaction K(+)(in) = K(+)(out). It carries out the reaction Na(+)(in) = Na(+)(out). Its activity is regulated as follows. Activated by low concentrations of ATP (&lt;1 uM). Undergoes rapid desensitisation. Sensitives to the ATP agonist:alpha/beta-methylene-ATP. Modulated by cholesterol. In terms of biological role, ATP-gated nonselective transmembrane cation channel permeable to potassium, sodium and with relatively high calcium permeability. Furthermore, CTP functions as a weak affinity agonist for P2RX1. Plays a role a role in urogenital, immune and cardiovascular function. Specifically, plays an important role in neurogenic contraction of smooth muscle of the vas deferens, and therefore is essential for normal male reproductive function. In addition, contributes to smooth muscle contractions of the urinary bladder. On platelets, contributes to platelet activation and aggregation and thereby, also to thrombosis. On neutrophils, it is involved in chemotaxis and in mitigating the activation of circulating cells. The polypeptide is P2X purinoceptor 1 (P2rx1) (Rattus norvegicus (Rat)).